Reading from the N-terminus, the 169-residue chain is Crossover junction endodeoxyribonuclease RuvC (169 aa).

Active-site residues include Asp15, Glu75, and Asp147. Mg(2+) contacts are provided by Asp15, Glu75, and Asp147.

The protein belongs to the RuvC family. Homodimer which binds Holliday junction (HJ) DNA. The HJ becomes 2-fold symmetrical on binding to RuvC with unstacked arms; it has a different conformation from HJ DNA in complex with RuvA. In the full resolvosome a probable DNA-RuvA(4)-RuvB(12)-RuvC(2) complex forms which resolves the HJ. It depends on Mg(2+) as a cofactor.

It is found in the cytoplasm. It catalyses the reaction Endonucleolytic cleavage at a junction such as a reciprocal single-stranded crossover between two homologous DNA duplexes (Holliday junction).. Functionally, the RuvA-RuvB-RuvC complex processes Holliday junction (HJ) DNA during genetic recombination and DNA repair. Endonuclease that resolves HJ intermediates. Cleaves cruciform DNA by making single-stranded nicks across the HJ at symmetrical positions within the homologous arms, yielding a 5'-phosphate and a 3'-hydroxyl group; requires a central core of homology in the junction. The consensus cleavage sequence is 5'-(A/T)TT(C/G)-3'. Cleavage occurs on the 3'-side of the TT dinucleotide at the point of strand exchange. HJ branch migration catalyzed by RuvA-RuvB allows RuvC to scan DNA until it finds its consensus sequence, where it cleaves and resolves the cruciform DNA. The chain is Crossover junction endodeoxyribonuclease RuvC from Caulobacter sp. (strain K31).